Reading from the N-terminus, the 37-residue chain is Large ribosomal subunit protein bL36 (37 aa).

Belongs to the bacterial ribosomal protein bL36 family.

The chain is Large ribosomal subunit protein bL36 from Dehalococcoides mccartyi (strain ATCC BAA-2266 / KCTC 15142 / 195) (Dehalococcoides ethenogenes (strain 195)).